We begin with the raw amino-acid sequence, 339 residues long: Ribosomal RNA small subunit methyltransferase C (339 aa).

This sequence belongs to the methyltransferase superfamily. RsmC family. Monomer.

Its subcellular location is the cytoplasm. The catalysed reaction is guanosine(1207) in 16S rRNA + S-adenosyl-L-methionine = N(2)-methylguanosine(1207) in 16S rRNA + S-adenosyl-L-homocysteine + H(+). Functionally, specifically methylates the guanine in position 1207 of 16S rRNA in the 30S particle. The chain is Ribosomal RNA small subunit methyltransferase C from Aliivibrio salmonicida (strain LFI1238) (Vibrio salmonicida (strain LFI1238)).